Consider the following 545-residue polypeptide: Oligopeptide-binding protein OppA (545 aa).

Positions 1–20 (MKKRWSIVTLMLIFTLVLSA) are cleaved as a signal peptide. Cys21 carries the N-palmitoyl cysteine lipid modification. Residue Cys21 is the site of S-diacylglycerol cysteine attachment. At Thr470 the chain carries Phosphothreonine.

Belongs to the bacterial solute-binding protein 5 family. The complex is composed of two ATP-binding proteins (OppD and OppF), two transmembrane proteins (OppB and OppC) and a solute-binding protein (OppA). OppA interacts with FloT in detergent-resistant membranes (DRM). Colocalizes rarely with FloT membrane assemblies.

Its subcellular location is the cell membrane. The protein localises to the membrane raft. In terms of biological role, part of the ABC transporter complex OppABCDF involved in the uptake of oligopeptides. Plays an important nutritional role. Binds peptides containing up to five amino acids residues regardless of their sequence, with highest affinity for tetra- and pentapeptides. Binds to the sporulation-promoting peptide PhrE (Ser-Arg-Asn-Val-Thr). Required for sporulation and genetic competence. In Bacillus subtilis (strain 168), this protein is Oligopeptide-binding protein OppA.